The sequence spans 135 residues: Large ribosomal subunit protein uL16c (135 aa).

The protein belongs to the universal ribosomal protein uL16 family. As to quaternary structure, part of the 50S ribosomal subunit.

It localises to the plastid. It is found in the chloroplast. The sequence is that of Large ribosomal subunit protein uL16c from Coffea arabica (Arabian coffee).